The primary structure comprises 236 residues: Purine nucleoside phosphorylase DeoD-type (236 aa).

His4 contributes to the a purine D-ribonucleoside binding site. Phosphate is bound by residues Gly20, Arg24, Arg43, and 87-90 (RVGT). Residues 179-181 (EME) and 203-204 (SD) contribute to the a purine D-ribonucleoside site. Asp204 acts as the Proton donor in catalysis.

It belongs to the PNP/UDP phosphorylase family. In terms of assembly, homohexamer; trimer of homodimers.

The enzyme catalyses a purine D-ribonucleoside + phosphate = a purine nucleobase + alpha-D-ribose 1-phosphate. The catalysed reaction is a purine 2'-deoxy-D-ribonucleoside + phosphate = a purine nucleobase + 2-deoxy-alpha-D-ribose 1-phosphate. Functionally, catalyzes the reversible phosphorolytic breakdown of the N-glycosidic bond in the beta-(deoxy)ribonucleoside molecules, with the formation of the corresponding free purine bases and pentose-1-phosphate. This is Purine nucleoside phosphorylase DeoD-type from Streptococcus pneumoniae (strain CGSP14).